A 103-amino-acid chain; its full sequence is Putative membrane protein insertion efficiency factor (103 aa).

The interval 68-103 is disordered; the sequence is HEGGYDPVPLAKQDAKPENNSESESLLNQPTETKSL. The span at 87 to 103 shows a compositional bias: polar residues; that stretch reads NSESESLLNQPTETKSL.

Belongs to the UPF0161 family.

The protein resides in the cell inner membrane. Its function is as follows. Could be involved in insertion of integral membrane proteins into the membrane. This chain is Putative membrane protein insertion efficiency factor, found in Idiomarina loihiensis (strain ATCC BAA-735 / DSM 15497 / L2-TR).